Consider the following 111-residue polypeptide: U-scoloptoxin(16)-Sm2a (111 aa).

The N-terminal stretch at 1–28 is a signal peptide; the sequence is MCAKPNHLFVTVTFIFGFAVCIVQISAW.

This sequence belongs to the scoloptoxin-16 family. Contains 4 disulfide bonds. In terms of tissue distribution, expressed by the venom gland.

The protein resides in the secreted. The chain is U-scoloptoxin(16)-Sm2a from Scolopendra morsitans (Tanzanian blue ringleg centipede).